Consider the following 48-residue polypeptide: Phospholipase A2 TI-Nh (48 aa).

His-25 is a catalytic residue. Asp-26 contributes to the Ca(2+) binding site.

This sequence belongs to the phospholipase A2 family. Group I subfamily. D49 sub-subfamily. As to quaternary structure, monomer. Ca(2+) is required as a cofactor. Expressed by the venom gland.

The protein resides in the secreted. The enzyme catalyses a 1,2-diacyl-sn-glycero-3-phosphocholine + H2O = a 1-acyl-sn-glycero-3-phosphocholine + a fatty acid + H(+). Functionally, phospholipase A2 with weak enzymatic activity, which partially inhibits thrombin enzymatic activity (Ki=73 nM), completely inhibits thrombin-induced platelet aggregation and retards fibrin clot formation (IC(50)=0.2 nM). May exert this anticoagulant effect through a non-enzymatic mechanism. The sequence is that of Phospholipase A2 TI-Nh from Naja haje haje (Egyptian cobra).